We begin with the raw amino-acid sequence, 685 residues long: Protein argonaute (685 aa).

The interval 1 to 99 (MNHLGKTEVF…LYPKGRRPLD (99 aa)) is N-terminal domain. Residues 100–176 (PKDPGERSVL…VDPAYRILCE (77 aa)) are linker L1. The PAZ domain maps to 169–265 (PAYRILCEMS…HLTGLLVPVL (97 aa)). The segment at 272 to 337 (EEEGSLALSL…SKPADALRVG (66 aa)) is linker L2. The interval 338–463 (FYRAQETALA…LLAKAGLQVV (126 aa)) is mid domain. Positions 464 to 685 (ALSGAYPAEL…EVDREKLFFV (222 aa)) are PIWI domain. Active-site residues include aspartate 478, glutamate 512, aspartate 546, and aspartate 660. Residue aspartate 478 participates in Mn(2+) binding. One can recognise a Piwi domain in the interval 507-671 (EAQAGERIPQ…LVKEVGRLGI (165 aa)). Positions 546, 660, and 685 each coordinate Mn(2+).

Belongs to the argonaute family. Long pAgo subfamily. Coimmunoprecipitates with a number of proteins involved in DNA replication or recombination including RepA (initiates replication), AddA/B (TT_C0638 and TT_C0639), ArgR, GyrA/B, HU (TT_C0984), PriA, Rad52 (TT_C1923), RecJ, SSB, TopA and UvrB. Most proteins remain associated with TtAgo after DNase treatment and associate with catalytically inactive protein. The cofactor is Mn(2+).

A DNA-guided ssDNA endonuclease. Uses short ssDNA sequences as guides (gDNA, also called small interfering DNA, siDNA) to bind complementary DNA target strands, resulting in cleavage of the target DNA (tDNA). The cleavage site is 10 nucleotides (nt) downstream of the target residue base-paired with the 5'-end of the gDNA. Plays a role in completion of DNA replication, participates in decatenating replicated DNA and plasmid. In situ purifies with 5'-phosphorylated long DNA (about 1160 nt, maps to the whole chromosome and plasmid), 25-35 nt RNAs that map to the whole chromosome and 15-18 nt DNA that maps to the replication terminus region (ter) on the chromosome and plasmid. Most short DNA starts with dC. Has been shown to have guide sequence-independent dsDNase activity called 'chopping', which requires unstable DNA (high AT-content, multiple mismatches or low salt conditions), and could be used to generate gDNA. Preferentially binds tDNA with dC at its 3'-terminus. Has also been shown to have no detectable guide sequence-independent dsDNase activity. The latter study proposes TtAgo may acquire gDNA from nicked dsDNA, by binding to 5'-phosphorylated-dC nicks, then cleaving 10 nt away on the opposite strand; subsequently an exonuclease (maybe AddA-AddB helicase/nuclease) trims the ends to generate the gDNA. In terms of biological role, involved in defense against invading mobile genetic elements. TtAgo interferes with plasmid DNA, stimulates expression of specific endogenous genes, including various CRISPR loci and at least part of the CRISPR adaptation machinery, but only when exogenous plasmid DNA is present. Upon purification from E.coli associates with gDNA 13-25 nt long with 5'-phosphorylated ends and with 10-150 nt RNA with 5'-OH. DNA corresponds to the expression plasmid rather than chromosomal DNA; 89% of gDNA starts with dC and 72% has dA in the second position. Endonucleolytically cleaves tDNA with 5'-phosphorylated gDNA but not 5'-phosphorylated gRNA; the active site is involved in processing or binding of ssDNA. Nicks or linearizes supercoiled plasmid target when it has the appropriate gDNA sequences, does not cleave linear tDNA. Positions 4 to 16 of the tDNA need to be base paired to the gDNA for efficient tDNA cleavage. Although the system can support single nucleotide insertions in either the gDNA or tDNA, in all cases cleavage activity is reduced, with a wide range of sequence- and position-specific effects. Its function is as follows. First characterized as a DNA-guided RNA endonuclease. Uses gDNA to bind complementary RNA target strands, resulting in cleavage of the target RNA. The cleavage site is 10 nucleotides (nt) downstream of the target residue base-paired with the 5'-end of the guide DNA. This Thermus thermophilus (strain ATCC BAA-163 / DSM 7039 / HB27) protein is Protein argonaute.